Here is a 67-residue protein sequence, read N- to C-terminus: Protein AaeX (67 aa).

2 consecutive transmembrane segments (helical) span residues 3 to 23 (LFPV…ELIL) and 43 to 63 (FVWH…YLIS).

It belongs to the AaeX family.

The protein resides in the cell membrane. The polypeptide is Protein AaeX (Enterobacter sp. (strain 638)).